The chain runs to 475 residues: Ribulose bisphosphate carboxylase large chain (475 aa).

A propeptide spanning residues 1-2 (MS) is cleaved from the precursor. N-acetylproline is present on P3. K14 is modified (N6,N6,N6-trimethyllysine). Residues N123 and T173 each contribute to the substrate site. The active-site Proton acceptor is K175. Residue K177 coordinates substrate. Mg(2+) contacts are provided by K201, D203, and E204. K201 carries the N6-carboxylysine modification. Residue H294 is the Proton acceptor of the active site. Residues R295, H327, and S379 each contribute to the substrate site.

Belongs to the RuBisCO large chain family. Type I subfamily. In terms of assembly, heterohexadecamer of 8 large chains and 8 small chains; disulfide-linked. The disulfide link is formed within the large subunit homodimers. Mg(2+) is required as a cofactor. In terms of processing, the disulfide bond which can form in the large chain dimeric partners within the hexadecamer appears to be associated with oxidative stress and protein turnover.

The protein resides in the plastid. It is found in the chloroplast. The enzyme catalyses 2 (2R)-3-phosphoglycerate + 2 H(+) = D-ribulose 1,5-bisphosphate + CO2 + H2O. The catalysed reaction is D-ribulose 1,5-bisphosphate + O2 = 2-phosphoglycolate + (2R)-3-phosphoglycerate + 2 H(+). Its function is as follows. RuBisCO catalyzes two reactions: the carboxylation of D-ribulose 1,5-bisphosphate, the primary event in carbon dioxide fixation, as well as the oxidative fragmentation of the pentose substrate in the photorespiration process. Both reactions occur simultaneously and in competition at the same active site. In Equisetum arvense (Field horsetail), this protein is Ribulose bisphosphate carboxylase large chain.